The sequence spans 206 residues: Triosephosphate isomerase (206 aa).

Histidine 76 serves as the catalytic Electrophile. Glutamate 146 serves as the catalytic Proton acceptor.

This sequence belongs to the triosephosphate isomerase family. As to quaternary structure, homodimer.

The catalysed reaction is D-glyceraldehyde 3-phosphate = dihydroxyacetone phosphate. It participates in carbohydrate biosynthesis; gluconeogenesis. It functions in the pathway carbohydrate degradation; glycolysis; D-glyceraldehyde 3-phosphate from glycerone phosphate: step 1/1. In Anopheles merus (Mosquito), this protein is Triosephosphate isomerase (Tpi).